A 197-amino-acid chain; its full sequence is Protein-S-isoprenylcysteine O-methyltransferase A (197 aa).

3 consecutive transmembrane segments (helical) span residues Met16–Gly36, Ala52–Leu72, and Phe81–Gly101. S-adenosyl-L-methionine-binding positions include His116–Val119, Tyr124, and His129–Tyr132. A helical transmembrane segment spans residues Val140–Trp160. Arg166 is a binding site for substrate. Glu170 provides a ligand contact to S-adenosyl-L-methionine.

The protein belongs to the class VI-like SAM-binding methyltransferase superfamily. Isoprenylcysteine carboxyl methyltransferase family. Zn(2+) is required as a cofactor. Expressed primarily in flowers, stems, leaves and roots. Almost not expressed in siliques. Detected in root tips and vascular tissues of roots, cotyledons, petiols, hypocotyls, filaments, pollen grains and the distal and proximal portions of the gynoecium.

It is found in the endoplasmic reticulum membrane. It carries out the reaction [protein]-C-terminal S-[(2E,6E)-farnesyl]-L-cysteine + S-adenosyl-L-methionine = [protein]-C-terminal S-[(2E,6E)-farnesyl]-L-cysteine methyl ester + S-adenosyl-L-homocysteine. With respect to regulation, inhibited by farnesylthioacetic acid (FTAA) and N-acetyl-S-trans, trans-farnesyl-l-cysteine (AFC). In terms of biological role, catalyzes the post-translational methylation of isoprenylated C-terminal cysteine residues, resulting in the modulation of the function of prenylated proteins. Involved in negative regulation of abscisic acid signaling. Carboxyl methylation is a reversible and potentially regulated step in the post-translational modification of prenylated proteins. The sequence is that of Protein-S-isoprenylcysteine O-methyltransferase A from Arabidopsis thaliana (Mouse-ear cress).